The following is a 136-amino-acid chain: UPF0102 protein BBta_0181 (136 aa).

This sequence belongs to the UPF0102 family.

This chain is UPF0102 protein BBta_0181, found in Bradyrhizobium sp. (strain BTAi1 / ATCC BAA-1182).